A 786-amino-acid polypeptide reads, in one-letter code: Receptor-interacting serine/threonine-protein kinase 4 (786 aa).

A Protein kinase domain is found at 22 to 286 (FAGWEKVGSG…QEITSETEDL (265 aa)). Residues 28–36 (VGSGGFGQV) and Lys-51 contribute to the ATP site. Residue Lys-51 forms a Glycyl lysine isopeptide (Lys-Gly) (interchain with G-Cter in ubiquitin) linkage. Residue Asp-143 is the Proton acceptor of the active site. Lys-145 participates in a covalent cross-link: Glycyl lysine isopeptide (Lys-Gly) (interchain with G-Cter in ubiquitin). Disordered stretches follow at residues 293–328 (EVKD…APPF) and 347–378 (QTLE…GVSS). Over residues 295–319 (KDLAHEPGEKSSLESKSEARPESSR) the composition is skewed to basic and acidic residues. Residues 357–378 (RSSSECKLPSSSSGKRLSGVSS) are compositionally biased toward low complexity. ANK repeat units lie at residues 439 to 468 (SSAS…NPNL), 472 to 501 (KGST…SVNA), 505 to 534 (DQWT…SVNE), 538 to 567 (EGRT…DVGL), 571 to 601 (DAWL…SVNA), 605 to 634 (DGRT…DVNI), 638 to 667 (QAQT…GKEA), 671 to 700 (EGYT…DVMA), 704 to 734 (LNQT…DLSD), and 736 to 765 (QGLS…HINL).

This sequence belongs to the protein kinase superfamily. TKL Ser/Thr protein kinase family. In terms of assembly, interacts with PRKCB. Interacts with TRAF1, TRAF2, TRAF3 and TRAF5. Interacts with BIRC2/c-IAP1, BIRC3/c-IAP2 and XIAP/BIRC4. In terms of processing, may be phosphorylated by MAP3K2 and MAP3K3. Post-translationally, proteolytically cleaved by during Fas-induced apoptosis. Cleavage at Asp-342 and Asp-380. Polyubiquitinated with 'Lys-48' and 'Lys-63'-linked chains by BIRC2/c-IAP1 and BIRC3/c-IAP2, leading to activation of NF-kappa-B. Expressed in the epidermis of the skin (at protein level). Ubiquitously expressed, with an abundant expression in the thymus, bone marrow, pro-B, pre-B and immature B cells and a weak expression in the spleen.

The protein localises to the cytoplasm. Its subcellular location is the membrane. It catalyses the reaction L-seryl-[protein] + ATP = O-phospho-L-seryl-[protein] + ADP + H(+). It carries out the reaction L-threonyl-[protein] + ATP = O-phospho-L-threonyl-[protein] + ADP + H(+). Its function is as follows. Serine/threonine protein kinase. Required for embryonic skin development and correct skin homeostasis in adults, via phosphorylation of PKP1 and subsequent promotion of keratinocyte differentiation and cell adhesion. It is a direct transcriptional target of TP63. Plays a role in NF-kappa-B activation. The protein is Receptor-interacting serine/threonine-protein kinase 4 (Ripk4) of Mus musculus (Mouse).